We begin with the raw amino-acid sequence, 248 residues long: NADP-dependent 3-hydroxy acid dehydrogenase YdfG (248 aa).

Residues 7 to 12, 32 to 33, 54 to 55, and Asn81 contribute to the NADP(+) site; these read GATAGF, RR, and DV. Ser134 serves as a coordination point for substrate. NADP(+) is bound by residues Tyr147, Lys151, and 177 to 185; that span reads PGLVGGTEF. Tyr147 serves as the catalytic Proton acceptor.

Belongs to the short-chain dehydrogenases/reductases (SDR) family. As to quaternary structure, homotetramer.

It catalyses the reaction 3-hydroxypropanoate + NADP(+) = 3-oxopropanoate + NADPH + H(+). The enzyme catalyses L-allo-threonine + NADP(+) = aminoacetone + CO2 + NADPH. Functionally, NADP-dependent dehydrogenase with broad substrate specificity acting on 3-hydroxy acids. Catalyzes the NADP-dependent oxidation of L-allo-threonine to L-2-amino-3-keto-butyrate, which is spontaneously decarboxylated into aminoacetone. Also acts on D-threonine, L-serine, D-serine, D-3-hydroxyisobutyrate, L-3-hydroxyisobutyrate, D-glycerate and L-glycerate. Able to catalyze the reduction of the malonic semialdehyde to 3-hydroxypropionic acid. YdfG is apparently supplementing RutE, the presumed malonic semialdehyde reductase involved in pyrimidine degradation since both are able to detoxify malonic semialdehyde. The protein is NADP-dependent 3-hydroxy acid dehydrogenase YdfG of Shigella flexneri.